Here is a 253-residue protein sequence, read N- to C-terminus: Dof zinc finger protein DOF3.4 (253 aa).

A Dof-type zinc finger spans residues 30–84 (LPCPRCDSSNTKFCYYNNYNFSQPRHFCKACRRYWTHGGTLRDVPVGGGTRKSAK). Positions 32, 35, 57, and 60 each coordinate Zn(2+). Residues 73-103 (VPVGGGTRKSAKRSRTCSNSSSSSVSGVVSN) form a disordered region. A compositionally biased stretch (low complexity) spans 90 to 103 (SNSSSSSVSGVVSN).

Interacts with OBF4 or OBF5. Constitutively expressed in the whole plant.

It is found in the nucleus. Transcription factor that binds specifically to a 5'-AA[AG]G-3' consensus core sequence. Enhances the DNA binding of OBF transcription factors to OCS elements. This is Dof zinc finger protein DOF3.4 (DOF3.4) from Arabidopsis thaliana (Mouse-ear cress).